We begin with the raw amino-acid sequence, 697 residues long: Polyribonucleotide nucleotidyltransferase (697 aa).

Positions 489 and 495 each coordinate Mg(2+). The region spanning 556–615 (PRIETIKIKPDKIREVIGSGGKVIRGITEATGVKIEIQDDGTINIASADPEATKKAIAMI) is the KH domain. The 69-residue stretch at 625-693 (GKTYKGRIVK…RSGRVKLSRK (69 aa)) folds into the S1 motif domain.

This sequence belongs to the polyribonucleotide nucleotidyltransferase family. The cofactor is Mg(2+).

It is found in the cytoplasm. The enzyme catalyses RNA(n+1) + phosphate = RNA(n) + a ribonucleoside 5'-diphosphate. Involved in mRNA degradation. Catalyzes the phosphorolysis of single-stranded polyribonucleotides processively in the 3'- to 5'-direction. The sequence is that of Polyribonucleotide nucleotidyltransferase from Bdellovibrio bacteriovorus (strain ATCC 15356 / DSM 50701 / NCIMB 9529 / HD100).